A 365-amino-acid chain; its full sequence is Putrescine carbamoyltransferase (365 aa).

Carbamoyl phosphate is bound by residues 54 to 58 (STRTR), arginine 105, and histidine 132. 277–280 (HCLP) lines the putrescine pocket.

The protein belongs to the aspartate/ornithine carbamoyltransferase superfamily. PTCase family. Homotrimer.

It localises to the cytoplasm. The enzyme catalyses carbamoyl phosphate + putrescine = N-carbamoylputrescine + phosphate + H(+). It functions in the pathway amine and polyamine biosynthesis; putrescine biosynthesis via agmatine pathway; putrescine from N-carbamoylputrescine (transferase route): step 1/1. Functionally, catalyzes the phosphorolysis of N-carbamoylputrescine to form carbamoyl phosphate and putrescine. Is involved in the degradation pathway of the polyamine agmatine. This Mycoplasma mycoides subsp. mycoides SC (strain CCUG 32753 / NCTC 10114 / PG1) protein is Putrescine carbamoyltransferase.